Here is a 319-residue protein sequence, read N- to C-terminus: Methionyl-tRNA formyltransferase (319 aa).

115–118 (SLLP) is a binding site for (6S)-5,6,7,8-tetrahydrofolate.

Belongs to the Fmt family.

It catalyses the reaction L-methionyl-tRNA(fMet) + (6R)-10-formyltetrahydrofolate = N-formyl-L-methionyl-tRNA(fMet) + (6S)-5,6,7,8-tetrahydrofolate + H(+). Attaches a formyl group to the free amino group of methionyl-tRNA(fMet). The formyl group appears to play a dual role in the initiator identity of N-formylmethionyl-tRNA by promoting its recognition by IF2 and preventing the misappropriation of this tRNA by the elongation apparatus. The protein is Methionyl-tRNA formyltransferase of Lactococcus lactis subsp. lactis (strain IL1403) (Streptococcus lactis).